Reading from the N-terminus, the 511-residue chain is Synaptotagmin-6 (511 aa).

Residues 1–59 (MSGVWGAGGPRCQAALAVLASLCRARPPPLGLDVETCQSFELQPPEQSPSAADSGTSVS) lie on the Vesicular side of the membrane. Residues 12-38 (CQAALAVLASLCRARPPPLGLDVETCQ) are cysteine motif. Residues 60–80 (LLAVVVIVCGVALVAVFFFLF) form a helical membrane-spanning segment. Topologically, residues 81-511 (WKLCWMPWRN…KSFKEGTPRL (431 aa)) are cytoplasmic. Over residues 93–103 (ASSPSSANPAS) the composition is skewed to low complexity. Disordered stretches follow at residues 93-118 (ASSP…MADK) and 157-182 (TKLQ…LPRQ). The segment covering 160 to 172 (QRQTTEPASSTRH) has biased composition (polar residues). Serine 217 carries the phosphoserine modification. C2 domains lie at 230 to 351 (SCGK…SIWK) and 362 to 495 (DLGE…AHWH). Ca(2+) contacts are provided by aspartate 261, aspartate 267, aspartate 319, phenylalanine 320, aspartate 321, serine 324, aspartate 327, aspartate 393, aspartate 399, aspartate 453, and aspartate 455. Residues 483–511 (MLAYPRKPIAHWHCLAEVKKSFKEGTPRL) are necessary for cell membrane association (isoform 2).

This sequence belongs to the synaptotagmin family. In terms of assembly, isoform 1: Homodimer; disulfide-linked via the cysteine motif. Isoform 1: Can also form heterodimers with SYT3, SYT7, SYT9 and SYT10. Isoform 1: Interacts with STX1A, STX1B and STX2; the interaction is Ca(2+)-dependent. Isoform 2: Is not able to form homodimer and heterodimers. The cofactor is Ca(2+).

The protein resides in the cytoplasmic vesicle. Its subcellular location is the secretory vesicle. The protein localises to the synaptic vesicle membrane. It localises to the membrane. It is found in the cytoplasm. The protein resides in the cytosol. Its subcellular location is the cell membrane. In terms of biological role, may be involved in Ca(2+)-dependent exocytosis of secretory vesicles through Ca(2+) and phospholipid binding to the C2 domain or may serve as Ca(2+) sensors in the process of vesicular trafficking and exocytosis. May mediate Ca(2+)-regulation of exocytosis in acrosomal reaction in sperm. The chain is Synaptotagmin-6 (Syt6) from Rattus norvegicus (Rat).